Consider the following 378-residue polypeptide: B3 domain-containing protein Os03g0622200 (378 aa).

Positions 29-124 (SKHFLKHMVG…SFDVLIFDPS (96 aa)) form a DNA-binding region, TF-B3 1. The disordered stretch occupies residues 140–159 (GRAENSAGAEQGGRNGRRTP). The segment at residues 256–370 (FVQVIHSSHV…TMTVHVLRRV (115 aa)) is a DNA-binding region (TF-B3 2).

It localises to the nucleus. This chain is B3 domain-containing protein Os03g0622200, found in Oryza sativa subsp. japonica (Rice).